The sequence spans 578 residues: Aspartate--tRNA ligase (578 aa).

Position 169 (Glu-169) interacts with L-aspartate. An aspartate region spans residues Gln-191 to Lys-194. An L-aspartate-binding site is contributed by Arg-213. Residues Arg-213–Glu-215 and Gln-222 contribute to the ATP site. Position 440 (His-440) interacts with L-aspartate. An ATP-binding site is contributed by Glu-474. Arg-481 serves as a coordination point for L-aspartate. An ATP-binding site is contributed by Gly-526 to Arg-529.

It belongs to the class-II aminoacyl-tRNA synthetase family. Type 1 subfamily. Homodimer.

The protein localises to the cytoplasm. It carries out the reaction tRNA(Asp) + L-aspartate + ATP = L-aspartyl-tRNA(Asp) + AMP + diphosphate. Catalyzes the attachment of L-aspartate to tRNA(Asp) in a two-step reaction: L-aspartate is first activated by ATP to form Asp-AMP and then transferred to the acceptor end of tRNA(Asp). The sequence is that of Aspartate--tRNA ligase from Ureaplasma parvum serovar 3 (strain ATCC 700970).